Consider the following 544-residue polypeptide: Membrane protein insertase YidC (544 aa).

The tract at residues 29–58 is disordered; that stretch reads TPKADPSATTQTLNPTSSESEDYVPTSSDS. The span at 35–46 shows a compositional bias: polar residues; sequence SATTQTLNPTSS. Helical transmembrane passes span 341-361, 421-441, and 499-519; these read FVLL…IIAI, GGCF…YVFL, and PVIF…YWLV.

This sequence belongs to the OXA1/ALB3/YidC family. Type 1 subfamily. In terms of assembly, interacts with the Sec translocase complex via SecD. Specifically interacts with transmembrane segments of nascent integral membrane proteins during membrane integration.

It is found in the cell inner membrane. Functionally, required for the insertion and/or proper folding and/or complex formation of integral membrane proteins into the membrane. Involved in integration of membrane proteins that insert both dependently and independently of the Sec translocase complex, as well as at least some lipoproteins. Aids folding of multispanning membrane proteins. The protein is Membrane protein insertase YidC of Pseudoalteromonas translucida (strain TAC 125).